The sequence spans 1035 residues: MGGCEVREFLLQFGFFLPLLTAWTGDCSHVSNQVVLLDTTTVMGELGWKTYPLNGWDAITEMDEHNRPIHTYQVCNVMEPNQNNWLRTNWISRDAAQKIYVEMKFTLRDCNSIPWVLGTCKETFNLYYIESDESHGTKFKPSQYIKIDTIAADESFTQMDLGDRILKLNTEIREVGPIERKGFYLAFQDIGACIALVSVRVFYKKCPFTVRNLAMFPDTIPRVDSSSLVEVRGSCVKSAEERDTPKLYCGADGDWLVPLGRCICSTGYEEIEGSCHACRPGFYKAFAGNTKCSKCPPHSSTYVEATSVCHCEKGYFRAEKDPPSMACTRPPSAPRNVAFNINETALILEWSPPSDTGGRKDLTYSVICKKCGLDTTQCEDCGGGLRFIPRHTGLINNSVVVLDFVSHVNYTFEIEAMNGVSELSISPKPFTAITVTTDHDAPSLIGMMRKDWASQNSLALSWQAPAFSNGAILDYEIKYYEKEHEQLTYSSTRSKAPSVIVTGLKPATTYIFHIRVRTATGYSGYSQKFEFETGDETSDMAAEQGQILVIATAAVGGFTLLVILTLFFLITGRCQWYIKAKMKSEEKRRTHLQNGHLRFPGIKTYIDPDTYEDPSLAVHEFAKEIDPSRIRIERVIGAGEFGEVCSGRLKTPGKREIPVAIKTLKGGHMDRQRRDFLREASIMGQFDHPNIIRLEGVVTKRSFPAIGVEAFCPSFLRAGFLNGIQAPHPVTAGGSLPPRIPAGRPVMIVVEYMENGSLDSFLRKHDGHFTVIQLVGMLRGIASGMKYLSDMGYVHRDLAARNILVNSNLVCKVSDFGLSRVLEDDPEAAYTTTGGKIPIRWTAPEAIAYRKFSSASDAWSYGIVMWEVMSYGERPYWEMSNQDVILSIEEGYRLPAPMGCPPSLHQLMLHCWQKERNHRPKFTDIVSFLDKLIRNPSALHTLVEDILVMPESPGDVPEYPLFVTVGDWLDSIKMGQYKSNFMAAGFTTFDLISRMSIDDIRRIGVILIGHQRRIVSSIQTLRLHMMHIQEKGFHV.

Residues 1–22 (MGGCEVREFLLQFGFFLPLLTA) form the signal peptide. Over 23–549 (WTGDCSHVSN…MAAEQGQILV (527 aa)) the chain is Extracellular. The Eph LBD domain maps to 33 to 211 (QVVLLDTTTV…FYKKCPFTVR (179 aa)). Fibronectin type-III domains follow at residues 330-440 (PPSA…TDHD) and 441-536 (APSL…TGDE). Residues asparagine 342, asparagine 396, and asparagine 409 are each glycosylated (N-linked (GlcNAc...) asparagine). Residues 550–570 (IATAAVGGFTLLVILTLFFLI) traverse the membrane as a helical segment. At 571–1035 (TGRCQWYIKA…MHIQEKGFHV (465 aa)) the chain is on the cytoplasmic side. A phosphotyrosine; by autocatalysis mark is found at tyrosine 605 and tyrosine 611. The Protein kinase domain maps to 630 to 943 (IRIERVIGAG…RNPSALHTLV (314 aa)). Residues 636 to 644 (IGAGEFGEV) and lysine 662 each bind ATP. Residue aspartate 797 is the Proton acceptor of the active site. Tyrosine 830 and tyrosine 977 each carry phosphotyrosine; by autocatalysis. Positions 960–1024 (PLFVTVGDWL…VSSIQTLRLH (65 aa)) constitute an SAM domain. A PDZ-binding motif is present at residues 1033 to 1035 (FHV).

This sequence belongs to the protein kinase superfamily. Tyr protein kinase family. Ephrin receptor subfamily. In terms of assembly, heterotetramer upon binding of the ligand. The heterotetramer is composed of an ephrin dimer and a receptor dimer. Oligomerization is probably required to induce biological responses. Interacts (via SAM domain) with ANKS1A (via SAM domain).

It is found in the membrane. It carries out the reaction L-tyrosyl-[protein] + ATP = O-phospho-L-tyrosyl-[protein] + ADP + H(+). Its function is as follows. Receptor tyrosine kinase which binds promiscuously GPI-anchored ephrin-A family ligands residing on adjacent cells, leading to contact-dependent bidirectional signaling into neighboring cells. The signaling pathway downstream of the receptor is referred to as forward signaling while the signaling pathway downstream of the ephrin ligand is referred to as reverse signaling. The polypeptide is Ephrin type-A receptor 6 (Epha6) (Mus musculus (Mouse)).